Consider the following 197-residue polypeptide: Baseplate puncturing device gp45 (197 aa).

Residues 172 to 197 (DAIINGKSTDKHIHRGDSGGTTGPMQ) form a disordered region. Residues 179–188 (STDKHIHRGD) are compositionally biased toward basic and acidic residues. 2 residues coordinate Fe cation: His183 and His185. Ca(2+) is bound by residues Asp188 and Ser189. Asp188 lines the chloride pocket.

As to quaternary structure, homotrimer. Part of a complex composed of three DNA circularization protein N, three baseplate hub protein gp44 and three sub-complex wedge (made of two copies of each baseplate protein gp46, gp47 and gp48) that forms the baseplate. Requires Ca(2+) as cofactor. Chloride serves as cofactor. Fe cation is required as a cofactor.

The protein localises to the virion. Its subcellular location is the host cytoplasm. Functionally, component of the baseplate that forms a central needlelike spike used to puncture the host cell membrane for tube insertion during virus entry. Probably involved in baseplate and tail assembly. Serves as the distal plug of tail tube channel and might regulate the process of the phage DNA and protein ejection into the host cell. The chain is Baseplate puncturing device gp45 from Escherichia phage Mu (Bacteriophage Mu).